We begin with the raw amino-acid sequence, 349 residues long: Protein RecA (349 aa).

Position 65-72 (65-72 (GPESSGKT)) interacts with ATP.

This sequence belongs to the RecA family.

The protein resides in the cytoplasm. In terms of biological role, can catalyze the hydrolysis of ATP in the presence of single-stranded DNA, the ATP-dependent uptake of single-stranded DNA by duplex DNA, and the ATP-dependent hybridization of homologous single-stranded DNAs. It interacts with LexA causing its activation and leading to its autocatalytic cleavage. The chain is Protein RecA from Azotobacter vinelandii.